The sequence spans 240 residues: Pyridoxine 5'-phosphate synthase (240 aa).

Position 7 (Asn7) interacts with 3-amino-2-oxopropyl phosphate. Residue 9–10 (DH) coordinates 1-deoxy-D-xylulose 5-phosphate. Residue Arg18 coordinates 3-amino-2-oxopropyl phosphate. The active-site Proton acceptor is the His43. 1-deoxy-D-xylulose 5-phosphate is bound by residues Arg45 and His50. The Proton acceptor role is filled by Glu70. Thr100 contributes to the 1-deoxy-D-xylulose 5-phosphate binding site. The active-site Proton donor is His191. 3-amino-2-oxopropyl phosphate is bound by residues Gly192 and 213-214 (GH).

This sequence belongs to the PNP synthase family. As to quaternary structure, homooctamer; tetramer of dimers.

The protein localises to the cytoplasm. It catalyses the reaction 3-amino-2-oxopropyl phosphate + 1-deoxy-D-xylulose 5-phosphate = pyridoxine 5'-phosphate + phosphate + 2 H2O + H(+). It functions in the pathway cofactor biosynthesis; pyridoxine 5'-phosphate biosynthesis; pyridoxine 5'-phosphate from D-erythrose 4-phosphate: step 5/5. Catalyzes the complicated ring closure reaction between the two acyclic compounds 1-deoxy-D-xylulose-5-phosphate (DXP) and 3-amino-2-oxopropyl phosphate (1-amino-acetone-3-phosphate or AAP) to form pyridoxine 5'-phosphate (PNP) and inorganic phosphate. The sequence is that of Pyridoxine 5'-phosphate synthase from Coxiella burnetii (strain Dugway 5J108-111).